The primary structure comprises 496 residues: Glycogen synthase (496 aa).

Residue lysine 24 participates in ADP-alpha-D-glucose binding.

It belongs to the glycosyltransferase 1 family. Bacterial/plant glycogen synthase subfamily.

The enzyme catalyses [(1-&gt;4)-alpha-D-glucosyl](n) + ADP-alpha-D-glucose = [(1-&gt;4)-alpha-D-glucosyl](n+1) + ADP + H(+). Its pathway is glycan biosynthesis; glycogen biosynthesis. Synthesizes alpha-1,4-glucan chains using ADP-glucose. The chain is Glycogen synthase from Nitrosospira multiformis (strain ATCC 25196 / NCIMB 11849 / C 71).